Here is a 208-residue protein sequence, read N- to C-terminus: CASP-like protein 3A1 (208 aa).

Composition is skewed to polar residues over residues 1-11 (MGSFANGQNGS) and 17-33 (TPATGSNAALEPPTTSA). A disordered region spans residues 1 to 33 (MGSFANGQNGSELGIQTPATGSNAALEPPTTSA). Topologically, residues 1 to 43 (MGSFANGQNGSELGIQTPATGSNAALEPPTTSAAAPRCPRLGM) are cytoplasmic. The chain crosses the membrane as a helical span at residues 44–64 (AMVAARAAALVMALLSVSLMV). The Extracellular portion of the chain corresponds to 65-92 (SAKQRGTLAIFGIEIPLYAKWSLSDSLQ). A helical membrane pass occupies residues 93–113 (SLVGISAAAAAYSLAQLLSIA). Residues 114–128 (HTALKKAPVVPSRRY) are Cytoplasmic-facing. Residues 129–149 (AWMLLAGDQVFAYAMLSAGSA) traverse the membrane as a helical segment. The Extracellular segment spans residues 150–183 (AAAVANLNRTGVRHTALPNFCKPLPRFCDLSAAS). Asparagine 157 is a glycosylation site (N-linked (GlcNAc...) asparagine). Residues 184–204 (IACAFLGCAFLAASAVIDVIW) form a helical membrane-spanning segment. Over 205–208 (LSRL) the chain is Cytoplasmic.

The protein belongs to the Casparian strip membrane proteins (CASP) family. Homodimer and heterodimers.

It is found in the cell membrane. The polypeptide is CASP-like protein 3A1 (Hordeum vulgare subsp. vulgare (Domesticated barley)).